Reading from the N-terminus, the 326-residue chain is tRNA-modifying protein YgfZ (326 aa).

Residues Trp-27 and Trp-189 each coordinate folate.

Belongs to the tRNA-modifying YgfZ family.

The protein resides in the cytoplasm. In terms of biological role, folate-binding protein involved in regulating the level of ATP-DnaA and in the modification of some tRNAs. It is probably a key factor in regulatory networks that act via tRNA modification, such as initiation of chromosomal replication. In Salmonella typhimurium (strain LT2 / SGSC1412 / ATCC 700720), this protein is tRNA-modifying protein YgfZ.